The following is a 1138-amino-acid chain: Myelin regulatory factor (1138 aa).

The Cytoplasmic segment spans residues 1 to 768 (MEVVDETEAL…CISQRFLQGT (768 aa)). Disordered regions lie at residues 56–150 (TASF…YSPQ), 171–200 (VSSR…HYPV), 246–267 (AELP…NTLN), and 279–339 (PGTV…SDSL). Over residues 67-88 (PGSSGLHHLSPPGSGPSPGRHG) the composition is skewed to low complexity. The residue at position 123 (lysine 123) is an N6-acetyllysine. Pro residues predominate over residues 178 to 198 (PPPPPAHLPGPPPPPPPPPHY). The NDT80 DNA-binding region spans 250–541 (PHPSKKRKHS…SNPGQFESDS (292 aa)). The short motif at 254–257 (KKRK) is the Nuclear localization signal element. Pro residues predominate over residues 286-302 (PPHPARAPSPPWPPQGP). The segment covering 329–339 (SPGLLQDSDSL) has biased composition (low complexity). The Nuclear localization signal signature appears at 491 to 494 (KKGK). The Peptidase S74 domain occupies 587 to 696 (SDLRAKEHVQ…KLTDNLETRI (110 aa)). Residues 680-711 (GAVKELCKLTDNLETRIDELERWSHKLAKLRR) are a coiled coil. The span at 721-733 (SGAFSHAGSQFSR) shows a compositional bias: polar residues. Residues 721-753 (SGAFSHAGSQFSRAGSVPHKKRPPKLANKSSPA) are disordered. The required for interaction with TMEM98 stretch occupies residues 765–1003 (LQGTIIALVV…QGQLDPAPSL (239 aa)). The chain crosses the membrane as a helical span at residues 769-789 (IIALVVVMAFSVVSMSTLYVL). Topologically, residues 790-1138 (SLRSEEDLVD…YYFHFYRLCD (349 aa)) are lumenal. A compositionally biased stretch (low complexity) spans 891 to 900 (ATDPALGPTL). Disordered stretches follow at residues 891–922 (ATDP…APLP) and 951–999 (ASPV…QLDP). Polar residues-rich tracts occupy residues 961-974 (QSKT…NLQS) and 987-999 (PAQF…QLDP). 3 N-linked (GlcNAc...) asparagine glycosylation sites follow: asparagine 1030, asparagine 1052, and asparagine 1116.

This sequence belongs to the MRF family. As to quaternary structure, homotrimer. Interacts (via C-terminal region) with TMEM98; the interaction inhibits MYRF self-cleavage. Glycosylated. In terms of processing, follows autocatalytic cleavage via the peptidase S74 domain. Autoprocessing is apparently constitutive and is essential for transcriptional activity. Autocatalytic cleavage is inhibited by interaction with TMEM98. Specifically expressed by postmitotic oligodendrocytes in the CNS. Not detected in the peripheral nervous system (PNS).

Its subcellular location is the endoplasmic reticulum membrane. It is found in the nucleus. It localises to the cytoplasm. In terms of biological role, constitutes a precursor of the transcription factor. Mediates the autocatalytic cleavage that releases the Myelin regulatory factor, N-terminal component that specifically activates transcription of central nervous system (CNS) myelin genes. Membrane-bound part that has no transcription factor activity and remains attached to the endoplasmic reticulum membrane following cleavage. Functionally, transcription factor that specifically activates expression of myelin genes such as MBP, MOG, MAG, DUSP15 and PLP1 during oligodendrocyte (OL) maturation, thereby playing a central role in oligodendrocyte maturation and CNS myelination. Specifically recognizes and binds DNA sequence 5'-CTGGYAC-3' in the regulatory regions of myelin-specific genes and directly activates their expression. Not only required during oligodendrocyte differentiation but is also required on an ongoing basis for the maintenance of expression of myelin genes and for the maintenance of a mature, viable oligodendrocyte phenotype. In Mus musculus (Mouse), this protein is Myelin regulatory factor (Myrf).